A 1212-amino-acid chain; its full sequence is Solute carrier family 12 member 2 (1212 aa).

Position 1 is an N-acetylmethionine (Met-1). At 1–286 the chain is on the cytoplasmic side; sequence MEPRPTAPSS…AESKGVVKFG (286 aa). Disordered regions lie at residues 36–81, 112–138, and 150–193; these read GTAV…QSRF, GAKQTPADGEASGESEPAKGSEEAKGR, and SSAE…GGGS. Residues Ser-77 and Ser-79 each carry the phosphoserine modification. The RFXV motif 1 motif lies at 80 to 83; sequence RFQV. Basic and acidic residues predominate over residues 127–137; the sequence is EPAKGSEEAKG. An RFXV motif 2 motif is present at residues 138–141; the sequence is RFRV. Over residues 150 to 160 the composition is skewed to low complexity; it reads SSAEDSLSDAA. 3 positions are modified to phosphothreonine; by OXSR1 and STK39: Thr-203, Thr-207, and Thr-212. A phosphothreonine mark is found at Thr-217 and Thr-230. Position 242 is a phosphoserine (Ser-242). A Phosphothreonine modification is found at Thr-266. The chain crosses the membrane as a discontinuously helical span at residues 287-316; that stretch reads WIKGVLVRCMLNIWGVMLFIRLSWIVGQAG. Position 297 (Leu-297) interacts with Na(+). K(+) contacts are provided by Asn-298 and Ile-299. A Na(+)-binding site is contributed by Trp-300. Chloride-binding residues include Gly-301, Val-302, and Met-303. Residues 317–336 form a helical membrane-spanning segment; it reads IGLSVLVIMMATVVTTITGL. Residues 337–367 lie on the Cytoplasmic side of the membrane; that stretch reads STSAIATNGFVRGGGAYYLISRSLGPEFGGA. A helical membrane pass occupies residues 368–395; the sequence is IGLIFAFANAVAVAMYVVGFAETVVELL. Phe-372 is a chloride binding site. Tyr-383 contacts K(+). The Extracellular portion of the chain corresponds to 396–405; the sequence is KEHSILMIDE. Residues 406–429 form a helical membrane-spanning segment; it reads INDIRIIGAITVVILLGISVAGME. The Cytoplasmic portion of the chain corresponds to 430-432; that stretch reads WEA. Residues 433-454 form a helical membrane-spanning segment; that stretch reads KAQIVLLVILLLAIGDFVIGTF. The Extracellular segment spans residues 455-486; the sequence is IPLESKKPKGFFGYKSEIFNENFGPDFREEET. A discontinuously helical membrane pass occupies residues 487–504; the sequence is FFSVFAIFFPAATGILAG. The K(+) site is built by Pro-496, Ala-497, and Thr-499. Residues Pro-496 and Ala-497 each coordinate chloride. 2 residues coordinate chloride: Gly-500 and Ile-501. At 505–519 the chain is on the cytoplasmic side; sequence ANISGDLADPQSAIP. The chain crosses the membrane as a helical span at residues 520–541; sequence KGTLLAILITTLVYVGIAVSVG. Topologically, residues 542-598 are extracellular; sequence SCVVRDATGNVNDTIVTELTNCTSAACKLNFDFSSCESSPCSYGLMNNFQVMSMVSG. N-linked (GlcNAc...) asparagine glycans are attached at residues Asn-553 and Asn-562. 2 cysteine pairs are disulfide-bonded: Cys-563–Cys-568 and Cys-577–Cys-582. The helical transmembrane segment at 599 to 623 threads the bilayer; sequence FTPLISAGIFSATLSSALASLVSAP. Na(+) contacts are provided by Ala-610, Ser-613, and Ser-614. Topologically, residues 624 to 651 are cytoplasmic; that stretch reads KIFQALCKDNIYPAFQMFAKGYGKNNEP. The next 2 helical transmembrane spans lie at 652–672 and 673–691; these read LRGYILTFLIALGFILIAELN and VIAPIISNFFLASYALINF. Phe-682 and Tyr-686 together coordinate chloride. The Cytoplasmic segment spans residues 692–714; it reads SVFHASLAKSPGWRPAFKYYNMW. 2 consecutive transmembrane segments (helical) span residues 715-732 and 733-745; these read ISLLGAILCCIVMFVINW and WAALLTYVIVLGL. The Cytoplasmic segment spans residues 746–1212; the sequence is YIYVTYKKPD…NHQSVLTFYS (467 aa). The scissor helix stretch occupies residues 761 to 778; that stretch reads STQALTYLNALQHSIRLS. Ser-940 and Ser-944 each carry phosphoserine. Residues 962-978 are compositionally biased toward basic and acidic residues; it reads LDTSKPLSEKPITHKVE. The interval 962-989 is disordered; the sequence is LDTSKPLSEKPITHKVEEEDGKTATQPL. The residue at position 994 (Ser-994) is a Phosphoserine.

This sequence belongs to the SLC12A transporter family. In terms of assembly, homodimer; adopts a domain-swap conformation at the scissor helices connecting the transmembrane domain and C-terminal domain. In terms of processing, phosphorylated at Thr-203, Thr-207 and Thr-212 by OXSR1/OSR1 and STK39/SPAK downstream of WNK kinases (WNK1, WNK2, WNK3 or WNK4), promoting its activity. Expressed in many tissues.

It is found in the basolateral cell membrane. It carries out the reaction K(+)(out) + 2 chloride(out) + Na(+)(out) = K(+)(in) + 2 chloride(in) + Na(+)(in). With respect to regulation, activated following phosphorylation by OXSR1/OSR1 and STK39/SPAK downstream of WNK kinases (WNK1, WNK2, WNK3 or WNK4). Inhibited by bumetanide. Inhibited by furosemide. In terms of biological role, cation-chloride cotransporter which mediates the electroneutral transport of chloride, potassium and/or sodium ions across the membrane. Plays a vital role in the regulation of ionic balance and cell volume. In Homo sapiens (Human), this protein is Solute carrier family 12 member 2 (SLC12A2).